The chain runs to 215 residues: L-fuculose phosphate aldolase (215 aa).

Substrate-binding positions include 28 to 29 (GN), 43 to 44 (TG), and 71 to 72 (SS). E73 acts as the Proton donor/acceptor in catalysis. Residues E73, H92, H94, and H155 each contribute to the Zn(2+) site.

Belongs to the aldolase class II family. AraD/FucA subfamily. Homotetramer. Zn(2+) serves as cofactor.

It carries out the reaction L-fuculose 1-phosphate = (S)-lactaldehyde + dihydroxyacetone phosphate. The protein operates within carbohydrate degradation; L-fucose degradation; L-lactaldehyde and glycerone phosphate from L-fucose: step 3/3. Its activity is regulated as follows. Inhibited by phosphoglycolohydroxamate (PGH). Functionally, involved in the degradation of L-fucose and D-arabinose. Catalyzes the reversible cleavage of L-fuculose 1-phosphate (Fuc1P) to yield dihydroxyacetone phosphate (DHAP) and L-lactaldehyde. Also able to catalyze the reversible cleavage of D-ribulose 1-phosphate, but FucA has a higher affinity for L-fuculose 1-phosphate and L-lactaldehyde than for D-ribulose 1-phosphate and glycolaldehyde, respectively. FucA possesses a high specificity for the dihydroxyacetone phosphate (DHAP), but accepts a great variety of different aldehydes and has a strong preference for L-configurated alpha-hydroxy aldehydes. FucA generates a vicinal diol unit having the absolute (3R,4R)-cis configuration (D-erythro). This Escherichia coli (strain K12) protein is L-fuculose phosphate aldolase.